The chain runs to 202 residues: NADH-quinone oxidoreductase subunit C (202 aa).

The protein belongs to the complex I 30 kDa subunit family. As to quaternary structure, NDH-1 is composed of 14 different subunits. Subunits NuoB, C, D, E, F, and G constitute the peripheral sector of the complex.

Its subcellular location is the cell inner membrane. It carries out the reaction a quinone + NADH + 5 H(+)(in) = a quinol + NAD(+) + 4 H(+)(out). Functionally, NDH-1 shuttles electrons from NADH, via FMN and iron-sulfur (Fe-S) centers, to quinones in the respiratory chain. The immediate electron acceptor for the enzyme in this species is believed to be ubiquinone. Couples the redox reaction to proton translocation (for every two electrons transferred, four hydrogen ions are translocated across the cytoplasmic membrane), and thus conserves the redox energy in a proton gradient. This Acidovorax sp. (strain JS42) protein is NADH-quinone oxidoreductase subunit C.